The chain runs to 214 residues: Cytochrome c biogenesis ATP-binding export protein CcmA (214 aa).

Residues 12–214 (LAAHALAFSR…TRMLTLEAAA (203 aa)) form the ABC transporter domain. 44 to 51 (GDNGAGKT) is a binding site for ATP.

Belongs to the ABC transporter superfamily. CcmA exporter (TC 3.A.1.107) family. In terms of assembly, the complex is composed of two ATP-binding proteins (CcmA) and two transmembrane proteins (CcmB).

Its subcellular location is the cell inner membrane. The catalysed reaction is heme b(in) + ATP + H2O = heme b(out) + ADP + phosphate + H(+). In terms of biological role, part of the ABC transporter complex CcmAB involved in the biogenesis of c-type cytochromes; once thought to export heme, this seems not to be the case, but its exact role is uncertain. Responsible for energy coupling to the transport system. In Xanthomonas oryzae pv. oryzae (strain MAFF 311018), this protein is Cytochrome c biogenesis ATP-binding export protein CcmA.